Consider the following 655-residue polypeptide: Hepatocyte growth factor activator serine protease (655 aa).

Residues 1 to 35 form the signal peptide; the sequence is MGRWAWVPSPWPPPGLGPFLLLLLLLLLLPRGFQP. The propeptide at 36–372 is removed in mature form; the sequence is QPGGNRTESP…RLEACESLTR (337 aa). Asn-40 and Asn-48 each carry an N-linked (GlcNAc...) asparagine glycan. Residues 64–102 form a disordered region; it reads TSETPATSAPEAEGPQSGGLPPPPRAVPSSSSPQAQALT. The region spanning 103–150 is the Fibronectin type-II domain; it reads EDGRPCRFPFRYGGRMLHACTSEGSAHRKWCATTHNYDRDRAWGYCVE. 19 cysteine pairs are disulfide-bonded: Cys-108–Cys-133, Cys-122–Cys-148, Cys-164–Cys-175, Cys-169–Cys-186, Cys-188–Cys-197, Cys-202–Cys-230, Cys-228–Cys-237, Cys-245–Cys-256, Cys-250–Cys-267, Cys-269–Cys-278, Cys-286–Cys-367, Cys-307–Cys-349, Cys-338–Cys-362, Cys-394–Cys-521, Cys-432–Cys-448, Cys-440–Cys-510, Cys-535–Cys-604, Cys-567–Cys-583, and Cys-594–Cys-622. Positions 160-198 constitute an EGF-like 1 domain; the sequence is ALDPCASGPCLNGGSCSNTQDPQSYHCSCPRAFTGKDCG. Residues 200 to 240 enclose the Fibronectin type-I domain; the sequence is EKCFDETRYEYLEGGDRWARVRQGHVEQCECFGGRTWCEGT. The EGF-like 2 domain maps to 241–279; the sequence is RHTACLSSPCLNGGTCHLIVATGTTVCACPPGFAGRLCN. Positions 286–367 constitute a Kringle domain; that stretch reads CFLGNGTGYR…SWEYCRLEAC (82 aa). A glycan (N-linked (GlcNAc...) asparagine) is linked at Asn-290. The Peptidase S1 domain maps to 408-646; that stretch reads IIGGSSSLPG…YVDWINDRIR (239 aa). His-447 serves as the catalytic Charge relay system. Residues Asn-468 and Asn-492 are each glycosylated (N-linked (GlcNAc...) asparagine). Catalysis depends on Asp-497, which acts as the Charge relay system. Asn-546 is a glycosylation site (N-linked (GlcNAc...) asparagine). The active-site Charge relay system is the Ser-598.

Belongs to the peptidase S1 family. Heterodimer of a short chain and a long chain linked by a disulfide bond. In terms of processing, the active form of HGFAC presents in the serum is derived from the COOH-terminal region of the precursor by the cleavage of bonds between Arg-372 and Val-373 and Arg-407 and Ile-408. As to expression, liver.

The protein resides in the secreted. Its function is as follows. Serine protease that hydrolyzes the inactive zymogen hepatocyte growth factor (HGFsc) to an activated disulfide-linked heterodimer, then initiating hepatocyte growth factor receptor signaling pathway. This Homo sapiens (Human) protein is Hepatocyte growth factor activator serine protease.